A 643-amino-acid polypeptide reads, in one-letter code: MKCLFSPNFMWMAAVVTSWVIIPAATDTSSAKSCSECHSNATCTVDGAATTCACQEGFTGDGLECVDLDECAVLGAHNCSATKSCVNTLGSYTCVCPEGFLLSSELGCEDVDECAEPGLSRCHALATCINGEGNYSCVCPAGYLGDGRHCECSPGSCGPGLDCVREGDALVCVDPCQVHRILDEYWRSTEYGSGYICDVSLGGWYRFVGQAGVRLPETCVPVLHCNTAAPMWLNGTHPSSDEGIVNRVACAHWSGDCCLWDAPIQVKACAGGYYVYNLTAPPECHLAYCTDPSSVEGTCEECRVDEDCKSDNGEWHCQCKQDFNVTDLSLLERRLECGVDDIKLSLSKCQLKSLGFEKVFMYLHDSQCSGFTERGDRDWMSVVTPARDGPCGTVMTRNETHATYSNTLYLADEIIIRDLNIRINFACSYPLDMKVSLKTSLQPMVSALNISMGGTGTFTVRMALFQSPAYTQPYQGSSVTLSTEAFLYVGTMLDGGDLSRFVLLMTNCYATPSSNATDPLKYFIIQDRCPRAADSTIQVEENGESPQGRFSVQMFRFAGNYDLVYLHCEVYLCDTVNEKCRPTCPETRFRSGSIIDQTRVLNLGPITRKGGQAAMSRAAPSSLGLLQVWLPLLLSATLTLMSP.

Positions 1–26 (MKCLFSPNFMWMAAVVTSWVIIPAAT) are cleaved as a signal peptide. In terms of domain architecture, EGF-like 1 spans 32–66 (KSCSECHSNATCTVDGAATTCACQEGFTGDGLECV). 21 disulfides stabilise this stretch: cysteine 34/cysteine 43, cysteine 37/cysteine 52, cysteine 54/cysteine 65, cysteine 71/cysteine 85, cysteine 79/cysteine 94, cysteine 96/cysteine 108, cysteine 114/cysteine 128, cysteine 122/cysteine 137, cysteine 139/cysteine 150, cysteine 152/cysteine 163, cysteine 157/cysteine 172, cysteine 176/cysteine 269, cysteine 197/cysteine 284, cysteine 219/cysteine 257, cysteine 225/cysteine 289, cysteine 250/cysteine 258, cysteine 299/cysteine 308, cysteine 302/cysteine 317, cysteine 319/cysteine 349, cysteine 337/cysteine 427, and cysteine 368/cysteine 391. Asparagine 40 carries an N-linked (GlcNAc...) asparagine glycan. An EGF-like 2; calcium-binding domain is found at 67 to 109 (DLDECAVLGAHNCSATKSCVNTLGSYTCVCPEGFLLSSELGCE). Asparagine 78 carries an N-linked (GlcNAc...) asparagine glycan. Residues 110–151 (DVDECAEPGLSRCHALATCINGEGNYSCVCPAGYLGDGRHCE) form the EGF-like 3; calcium-binding domain. Asparagine 134 carries N-linked (GlcNAc...) asparagine glycosylation. The beta hairpin stretch occupies residues 152–173 (CSPGSCGPGLDCVREGDALVCV). The interval 174-293 (DPCQVHRILD…CHLAYCTDPS (120 aa)) is D10C. An N-linked (GlcNAc...) asparagine glycan is attached at asparagine 234. The N-linked (GlcNAc...) asparagine glycan is linked to asparagine 277. In terms of domain architecture, EGF-like 4 spans 294–325 (SVEGTCEECRVDEDCKSDNGEWHCQCKQDFNV). A glycan (N-linked (GlcNAc...) asparagine) is linked at asparagine 324. A ZP-N region spans residues 336–431 (ECGVDDIKLS…RINFACSYPL (96 aa)). Positions 336–587 (ECGVDDIKLS…EKCRPTCPET (252 aa)) constitute a ZP domain. Residues asparagine 398 and asparagine 449 are each glycosylated (N-linked (GlcNAc...) asparagine). The flexible ZP-N/ZP-C linker; important for secretion and polymerization into filaments stretch occupies residues 432–455 (DMKVSLKTSLQPMVSALNISMGGT). The tract at residues 456–466 (GTFTVRMALFQ) is internal hydrophobic patch (IHP). Residues 456–587 (GTFTVRMALF…EKCRPTCPET (132 aa)) are ZP-C. 3 disulfides stabilise this stretch: cysteine 508-cysteine 568, cysteine 529-cysteine 584, and cysteine 573-cysteine 580. Asparagine 515 carries N-linked (GlcNAc...) asparagine glycosylation. Residues 588–591 (RFRS) form an essential for cleavage by HPN region. Positions 600 to 608 (VLNLGPITR) are external hydrophobic patch (EHP); regulates polymerization into filaments. A lipid anchor (GPI-anchor amidated serine) is attached at serine 621. A propeptide spans 622–643 (SLGLLQVWLPLLLSATLTLMSP) (removed in mature form).

As to quaternary structure, homodimer that then polymerizes into long filaments. The filaments can additionally assemble laterally to form a sheet. The filaments consist of a zigzag-shaped backbone with laterally protruding arms which interact with bacterial adhesin fimH. Two fimH molecules can bind to a single UMOD monomer. In terms of processing, N-glycosylated. Post-translationally, proteolytically cleaved at a conserved C-terminal proteolytic cleavage site to generate the secreted form found in urine. This cleavage is catalyzed by HPN.

The protein resides in the apical cell membrane. It localises to the basolateral cell membrane. The protein localises to the cell projection. It is found in the cilium membrane. Its subcellular location is the secreted. In terms of biological role, functions in biogenesis and organization of the apical membrane of epithelial cells of the thick ascending limb of Henle's loop (TALH), where it promotes formation of complex filamentous gel-like structure that may play a role in the water barrier permeability. May serve as a receptor for binding and endocytosis of cytokines (IL-1, IL-2) and TNF. Facilitates neutrophil migration across renal epithelia. In the urine, may contribute to colloid osmotic pressure, retards passage of positively charged electrolytes, and inhibits formation of liquid containing supersaturated salts and subsequent formation of salt crystals. Protects against urinary tract infections by binding to type 1 fimbriated E.coli. Binds to bacterial adhesin fimH which mediates the stable formation of bacterial aggregates, prevents the binding of E.coli to uroplakins UPK1A and UPK1B which act as urothelial receptors for type I fimbriae, and allows for pathogen clearance through micturation. Also promotes aggregation of other bacteria including K.pneumoniae, P.aeruginosa and S.mitis and so may also protect against other uropathogens. The protein is Uromodulin (UMOD) of Bos taurus (Bovine).